Consider the following 1563-residue polypeptide: Ribulose bisphosphate carboxylase (1563 aa).

Substrate is bound by residues His-32 and Ser-79. A propeptide spans 197–217 (linker); the sequence is LAAAFVGASTTRKASSVARRA. Asn-328 lines the substrate pocket. Catalysis depends on Lys-383, which acts as the Proton acceptor. Substrate is bound at residue Lys-385. Residues Lys-408, Asp-410, and Glu-411 each coordinate Mg(2+). Lys-408 carries the N6-carboxylysine modification. Residue His-504 is the Proton acceptor of the active site. Substrate-binding residues include Arg-505, His-538, and Ser-585. Positions 703-723 are cleaved as a propeptide — linker; it reads LAAAFVGASTTRKASSVARRA. Asn-834 is a binding site for substrate. Lys-889 serves as the catalytic Proton acceptor. Position 891 (Lys-891) interacts with substrate. Mg(2+)-binding residues include Lys-914, Asp-916, and Glu-917. The residue at position 914 (Lys-914) is an N6-carboxylysine. The Proton acceptor role is filled by His-1010. Arg-1011, His-1044, and Ser-1091 together coordinate substrate. The propeptide at 1209–1229 is linker; the sequence is LAAAFVGASTTRKASSVARRA. Asn-1340 contributes to the substrate binding site. The active-site Proton acceptor is the Lys-1395. Lys-1397 serves as a coordination point for substrate. 3 residues coordinate Mg(2+): Lys-1420, Asp-1422, and Glu-1423. Lys-1420 carries the N6-carboxylysine modification. His-1516 serves as the catalytic Proton acceptor. Residues Arg-1517 and His-1550 each coordinate substrate.

The protein belongs to the RuBisCO large chain family. Type II subfamily. As to quaternary structure, homodimer. The cofactor is Mg(2+). In Western blots an approximately 220 kDa polyprotein and 2 smaller proteins of about 55 and 52 kDa are detected, suggesting the polyprotein may be cleaved at one end of the linker and then at the other end to give mature RuBisCO.

The protein resides in the plastid. It is found in the chloroplast. It catalyses the reaction 2 (2R)-3-phosphoglycerate + 2 H(+) = D-ribulose 1,5-bisphosphate + CO2 + H2O. It carries out the reaction D-ribulose 1,5-bisphosphate + O2 = 2-phosphoglycolate + (2R)-3-phosphoglycerate + 2 H(+). RuBisCO catalyzes two reactions: the carboxylation of D-ribulose 1,5-bisphosphate, the primary event in carbon dioxide fixation, as well as the oxidative fragmentation of the pentose substrate. Both reactions occur simultaneously and in competition at the same active site. This Prorocentrum minimum (Dinoflagellate) protein is Ribulose bisphosphate carboxylase (rbcL).